The primary structure comprises 498 residues: Archaemetzincin-1 (498 aa).

A Zn(2+)-binding site is contributed by His-261. The active-site Proton acceptor is the Glu-262. Positions 265, 272, 277, 296, and 299 each coordinate Zn(2+). The tract at residues 332–381 (QEAGEPSVWEDTPPASADSGMCCESDSEPGTSVSEPLTPDAGSHTFASGP) is disordered.

Belongs to the peptidase M54 family. The cofactor is Zn(2+).

In terms of biological role, probable zinc metalloprotease. This Homo sapiens (Human) protein is Archaemetzincin-1 (AMZ1).